Consider the following 267-residue polypeptide: Glucosamine-6-phosphate deaminase (267 aa).

D72 functions as the Proton acceptor; for enolization step in the catalytic mechanism. The active-site For ring-opening step is the D141. H143 serves as the catalytic Proton acceptor; for ring-opening step. The active-site For ring-opening step is E148.

Belongs to the glucosamine/galactosamine-6-phosphate isomerase family. NagB subfamily. Homohexamer.

It carries out the reaction alpha-D-glucosamine 6-phosphate + H2O = beta-D-fructose 6-phosphate + NH4(+). It functions in the pathway amino-sugar metabolism; N-acetylneuraminate degradation; D-fructose 6-phosphate from N-acetylneuraminate: step 5/5. With respect to regulation, allosterically activated by N-acetylglucosamine 6-phosphate (GlcNAc6P). In terms of biological role, catalyzes the reversible isomerization-deamination of glucosamine 6-phosphate (GlcN6P) to form fructose 6-phosphate (Fru6P) and ammonium ion. The protein is Glucosamine-6-phosphate deaminase of Pasteurella multocida (strain Pm70).